A 442-amino-acid chain; its full sequence is MTGFGGVKNVVVVGLGMTGLSVVKHLLRQPEALIVKVIDTRETPPGQEQLPEQVELHSGSWQQDWLLDADLIVTNPGIALASSQLQPAIKKGTPVVGDIELFAWAVTAPVIAITGSNGKSTVTDLTGEMANAAGVKTAVGGNIGFAALDLLEQDADLYVLELSSFQLETTSSLKLKAAAFLNLSEDHMDRYQGMEDYRQAKLRVFDHADVCIVNRDDKETYPDTADKTLISFGFDTSDEYGCIEENGRLFLAKNNTPIIAANELGLVGKHNIANSLVALALLDAAGVNTNKTLDTLKRYNGLTHRCQVVAEMNGVRWVNDSKATNVASTLAALSGLSIEGKLHLLVGGVGKGADFSELSPALNELDLMMYCFGEDGVQFMPLDPRSRLCQTMDEAIELLSPELTFGDMVMLSPACASFDQYTNFMARGDAFTALAKHYSTEK.

G115–T121 is an ATP binding site.

This sequence belongs to the MurCDEF family.

Its subcellular location is the cytoplasm. The catalysed reaction is UDP-N-acetyl-alpha-D-muramoyl-L-alanine + D-glutamate + ATP = UDP-N-acetyl-alpha-D-muramoyl-L-alanyl-D-glutamate + ADP + phosphate + H(+). It functions in the pathway cell wall biogenesis; peptidoglycan biosynthesis. In terms of biological role, cell wall formation. Catalyzes the addition of glutamate to the nucleotide precursor UDP-N-acetylmuramoyl-L-alanine (UMA). This chain is UDP-N-acetylmuramoylalanine--D-glutamate ligase, found in Aliivibrio salmonicida (strain LFI1238) (Vibrio salmonicida (strain LFI1238)).